Here is an 80-residue protein sequence, read N- to C-terminus: Translation initiation factor IF-1, chloroplastic (80 aa).

The S1-like domain occupies 1 to 72; the sequence is MKEHDLINME…TKGRILYRIR (72 aa).

It belongs to the IF-1 family. Component of the 30S ribosomal translation pre-initiation complex which assembles on the 30S ribosome in the order IF-2 and IF-3, IF-1 and N-formylmethionyl-tRNA(fMet); mRNA recruitment can occur at any time during PIC assembly.

It localises to the plastid. The protein resides in the chloroplast. Functionally, one of the essential components for the initiation of protein synthesis. Stabilizes the binding of IF-2 and IF-3 on the 30S subunit to which N-formylmethionyl-tRNA(fMet) subsequently binds. Helps modulate mRNA selection, yielding the 30S pre-initiation complex (PIC). Upon addition of the 50S ribosomal subunit IF-1, IF-2 and IF-3 are released leaving the mature 70S translation initiation complex. This Psilotum nudum (Whisk fern) protein is Translation initiation factor IF-1, chloroplastic.